Here is a 966-residue protein sequence, read N- to C-terminus: LRR receptor-like serine/threonine-protein kinase ERL1 (966 aa).

Positions 1–25 (MKEKMQRMVLSLAMVGFMVFGVASA) are cleaved as a signal peptide. Over 26 to 582 (MNNEGKALMA…PLPKSRVFSR (557 aa)) the chain is Extracellular. Residues 40 to 63 (FSNLVNMLLDWDDVHNSDLCSWRG) form an LRR 1 repeat. 2 N-linked (GlcNAc...) asparagine glycosylation sites follow: Asn-68 and Asn-77. 20 LRR repeats span residues 75 to 94 (SLNLSSLNLGGEISPAIGDL), 95 to 118 (RNLQSIDLQGNKLAGQIPDEIGNC), 120 to 142 (SLVYLDLSENLLYGDIPFSISKL), 143 to 166 (KQLETLNLKNNQLTGPVPATLTQI), 168 to 190 (NLKRLDLAGNHLTGEISRLLYWN), 192 to 214 (VLQYLGLRGNMLTGTLSSDMCQL), 215 to 238 (TGLWYFDVRGNNLTGTIPESIGNC), 239 to 261 (TSFQILDISYNQITGEIPYNIGF), 262 to 285 (LQVATLSLQGNRLTGRIPEVIGLM), 286 to 311 (QALAVLDLSDNELVGPIPPILGNLSF), 313 to 333 (GKLYLHGNMLTGPIPSELGNM), 334 to 357 (SRLSYLQLNDNKLVGTIPPELGKL), 359 to 381 (QLFELNLANNRLVGPIPSNISSC), 383 to 404 (ALNQFNVHGNLLSGSIPLAFRN), 405 to 429 (LGSLTYLNLSSNNFKGKIPVELGHI), 431 to 453 (NLDKLDLSGNNFSGSIPLTLGDL), 454 to 476 (EHLLILNLSRNHLSGQLPAEFGN), 478 to 500 (RSIQMIDVSFNLLSGVIPTELGQ), 501 to 525 (LQNLNSLILNNNKLHGKIPDQLTNC), and 527 to 550 (TLVNLNVSFNNLSGIVPPMKNFSR). Asn-226 and Asn-237 each carry an N-linked (GlcNAc...) asparagine glycan. Asn-308 and Asn-332 each carry an N-linked (GlcNAc...) asparagine glycan. Asn-377 carries an N-linked (GlcNAc...) asparagine glycan. N-linked (GlcNAc...) asparagine glycans are attached at residues Asn-412, Asn-441, and Asn-460. Asn-532, Asn-537, and Asn-547 each carry an N-linked (GlcNAc...) asparagine glycan. The helical transmembrane segment at 583–603 (GALICIVLGVITLLCMIFLAV) threads the bilayer. The Cytoplasmic portion of the chain corresponds to 604 to 966 (YKSMQQKKIL…FREVISKSSI (363 aa)). Residues Thr-637 and Thr-645 each carry the phosphothreonine modification. One can recognise a Protein kinase domain in the interval 648 to 921 (LNEKFIIGYG…RVLLSLVPSL (274 aa)). ATP contacts are provided by residues 654 to 662 (IGYGASSTV) and Lys-676. Phosphotyrosine occurs at positions 721 and 760. Asp-773 serves as the catalytic Proton acceptor. Tyr-815 carries the phosphotyrosine modification. Thr-823 is modified (phosphothreonine).

This sequence belongs to the protein kinase superfamily. Ser/Thr protein kinase family. Homodimer and heterodimer with ERECTA and TMM. Interacts with EPF1 and EPF2. Interacts with SERK1, SERK2, SERK3/BAK1 and SERK4 in a EPF1-induced manner. As to expression, mostly expressed in developing organs, including bud clusters, flowers, siliques and young rosettes. Also detected in mature aboveground organs, such as leaves, stems and pedicels, but barely in roots.

The protein resides in the cell membrane. It carries out the reaction L-seryl-[protein] + ATP = O-phospho-L-seryl-[protein] + ADP + H(+). It catalyses the reaction L-threonyl-[protein] + ATP = O-phospho-L-threonyl-[protein] + ADP + H(+). Receptor kinase that regulates inflorescence architecture and organ shape as well as stomatal patterning, including density and clustering, together with ER and ERL2. Redundantly involved with ER in procambial development regulation. Forms a functional ligand-receptor pair with EPF1 (AC Q8S8I4). Forms a constitutive complex with TMM involved in the recognition of the stomatal regulatory peptides EPF1, EPF2 and EPFL9/STOMAGEN. The chain is LRR receptor-like serine/threonine-protein kinase ERL1 from Arabidopsis thaliana (Mouse-ear cress).